The chain runs to 465 residues: Cysteine--tRNA ligase (465 aa).

Position 27 (cysteine 27) interacts with Zn(2+). The short motif at 29 to 39 (PTVYDDAHLGH) is the 'HIGH' region element. Zn(2+)-binding residues include cysteine 207, histidine 237, and glutamate 241. Positions 269 to 273 (KMSKS) match the 'KMSKS' region motif. Position 272 (lysine 272) interacts with ATP.

The protein belongs to the class-I aminoacyl-tRNA synthetase family. Monomer. The cofactor is Zn(2+).

The protein localises to the cytoplasm. The enzyme catalyses tRNA(Cys) + L-cysteine + ATP = L-cysteinyl-tRNA(Cys) + AMP + diphosphate. This is Cysteine--tRNA ligase from Helicobacter pylori (strain Shi470).